We begin with the raw amino-acid sequence, 298 residues long: Glycine--tRNA ligase alpha subunit (298 aa).

Belongs to the class-II aminoacyl-tRNA synthetase family. Tetramer of two alpha and two beta subunits.

Its subcellular location is the cytoplasm. The catalysed reaction is tRNA(Gly) + glycine + ATP = glycyl-tRNA(Gly) + AMP + diphosphate. The sequence is that of Glycine--tRNA ligase alpha subunit from Helicobacter acinonychis (strain Sheeba).